The primary structure comprises 276 residues: Formamidopyrimidine-DNA glycosylase (276 aa).

Catalysis depends on Pro-2, which acts as the Schiff-base intermediate with DNA. The active-site Proton donor is the Glu-3. Catalysis depends on Lys-60, which acts as the Proton donor; for beta-elimination activity. DNA contacts are provided by His-93 and Arg-112. The FPG-type zinc-finger motif lies at 240 to 274 (HVYGRKQQPCHHCDTAIEKTVVGGRGTHYCPNCQP). The active-site Proton donor; for delta-elimination activity is the Arg-264.

The protein belongs to the FPG family. As to quaternary structure, monomer. Requires Zn(2+) as cofactor.

The enzyme catalyses Hydrolysis of DNA containing ring-opened 7-methylguanine residues, releasing 2,6-diamino-4-hydroxy-5-(N-methyl)formamidopyrimidine.. It carries out the reaction 2'-deoxyribonucleotide-(2'-deoxyribose 5'-phosphate)-2'-deoxyribonucleotide-DNA = a 3'-end 2'-deoxyribonucleotide-(2,3-dehydro-2,3-deoxyribose 5'-phosphate)-DNA + a 5'-end 5'-phospho-2'-deoxyribonucleoside-DNA + H(+). In terms of biological role, involved in base excision repair of DNA damaged by oxidation or by mutagenic agents. Acts as a DNA glycosylase that recognizes and removes damaged bases. Has a preference for oxidized purines, such as 7,8-dihydro-8-oxoguanine (8-oxoG). Has AP (apurinic/apyrimidinic) lyase activity and introduces nicks in the DNA strand. Cleaves the DNA backbone by beta-delta elimination to generate a single-strand break at the site of the removed base with both 3'- and 5'-phosphates. The chain is Formamidopyrimidine-DNA glycosylase from Shouchella clausii (strain KSM-K16) (Alkalihalobacillus clausii).